The following is a 545-amino-acid chain: Sphingosine-1-phosphate lyase (545 aa).

Residues 1 to 26 are Lumenal-facing; the sequence is MRPFSGSDCLKPVTEGINRAFGAKEP. Residues 27–47 form a helical; Signal-anchor for type III membrane protein membrane-spanning segment; it reads WQVATITATTVLGGVWLWTVI. The Cytoplasmic segment spans residues 48 to 545; the sequence is CQDENLYIRG…HSMYYTPSQK (498 aa). At lysine 342 the chain carries N6-(pyridoxal phosphate)lysine.

It belongs to the group II decarboxylase family. Sphingosine-1-phosphate lyase subfamily. Pyridoxal 5'-phosphate is required as a cofactor. As to expression, localized to the developing gut primordium during embryogenesis.

Its subcellular location is the endoplasmic reticulum membrane. It catalyses the reaction sphinganine 1-phosphate = hexadecanal + phosphoethanolamine. The protein operates within lipid metabolism; sphingolipid metabolism. Its function is as follows. Cleaves phosphorylated sphingoid bases (PSBs), such as sphingosine-1-phosphate, into fatty aldehydes and phosphoethanolamine. Sphingolipid catabolism is required for normal development including viability, reproduction and muscle development. This is Sphingosine-1-phosphate lyase from Drosophila melanogaster (Fruit fly).